Consider the following 1125-residue polypeptide: Tudor domain-containing protein 7 (1125 aa).

The HTH OST-type 1 domain maps to 3 to 76 (EADLVSKMLR…SGEITCYAMA (74 aa)). A disordered region spans residues 126-157 (PGFSSDFSVSKKPNPTLLRDKGNSLGVKSDAE). Positions 127–138 (GFSSDFSVSKKP) are enriched in polar residues. The HTH OST-type 2 domain occupies 260–329 (KMDEVQNRIK…GQDLLLYPAK (70 aa)). Ser346 is modified (phosphoserine). The HTH OST-type 3 domain maps to 364–433 (MPGDFKEKVA…PQKAILYAKL (70 aa)). 2 Tudor domains span residues 540-597 (TVHV…FCSL) and 730-787 (LPFC…FLQE). A compositionally biased stretch (low complexity) spans 881 to 895 (SSGTSSPNSKSGSTP). A disordered region spans residues 881–904 (SSGTSSPNSKSGSTPVPGSTGDNF). Ser886 carries the post-translational modification Phosphoserine. An interaction with CDK17 region spans residues 888 to 1125 (NSKSGSTPVP…EYLVELSKVN (238 aa)). Positions 920–1125 (TSSLSVEELP…EYLVELSKVN (206 aa)) are interaction with CABLES1.

Belongs to the TDRD7 family. Found in a mRNP complex, at least composed of TDRD1, TDRD6, TDRD7 and DDX4. Found in a complex containing CABLES1, CDK16 and CDK17. Interacts with CABLES1, CDK17 and PIWIL1.

The protein localises to the cytoplasm. Its function is as follows. Component of specific cytoplasmic RNA granules involved in post-transcriptional regulation of specific genes: probably acts by binding to specific mRNAs and regulating their translation. Required for lens transparency during lens development, by regulating translation of genes such as CRYBB3 and HSPB1 in the developing lens. Also required during spermatogenesis. This chain is Tudor domain-containing protein 7 (TDRD7), found in Canis lupus familiaris (Dog).